A 120-amino-acid polypeptide reads, in one-letter code: Natriuretic peptide (120 aa).

Residues 1–25 (MVGLSRLADGGLLLVLALLPLALDG) form the signal peptide. Positions 26–70 (KPAPLEKAPMAPARIIPYLRPVGKESRAALDRMVPPEDGDSRRLE) are excised as a propeptide. Cysteine 81 and cysteine 97 are joined by a disulfide. The propeptide occupies 110–120 (ILPYLRPIRKE).

It belongs to the natriuretic peptide family. As to expression, expressed by the venom gland.

It is found in the secreted. In terms of biological role, natriuretic peptide that dose-dependently induces the rapid relaxation of rat aortic strips phenylephrine-precontracted. Acts by stimulating cGMP production in a dose-dependent manner (by probably activating NPR1 and/or NPR2). May also show potent hypotensive effects. This is Natriuretic peptide from Micrurus altirostris (Uruguayan coral snake).